A 111-amino-acid polypeptide reads, in one-letter code: MLFNTFVVTALASLAAATPTRRNEPAAGSCSTGELQCCKSVQSADSKSLTSLFGLLGLVVGDITGLVGVTCSPVTVVGAGGAQCNAQAVCCNDNSFNGLIALGCTPINLNL.

The first 17 residues, 1 to 17 (MLFNTFVVTALASLAAA), serve as a signal peptide directing secretion. 4 disulfide bridges follow: C30-C90, C37-C84, C38-C71, and C91-C104.

The protein belongs to the fungal hydrophobin family. In terms of assembly, self-assembles to form functional amyloid fibrils called rodlets. Self-assembly into fibrillar rodlets occurs spontaneously at hydrophobic:hydrophilic interfaces and the rodlets further associate laterally to form amphipathic monolayers.

It is found in the secreted. It localises to the cell wall. In terms of biological role, aerial growth, conidiation, and dispersal of filamentous fungi in the environment rely upon a capability of their secreting small amphipathic proteins called hydrophobins (HPBs) with low sequence identity. Class I can self-assemble into an outermost layer of rodlet bundles on aerial cell surfaces, conferring cellular hydrophobicity that supports fungal growth, development and dispersal; whereas Class II form highly ordered films at water-air interfaces through intermolecular interactions but contribute nothing to the rodlet structure. In Pleurotus ostreatus (strain PC15) (Oyster mushroom), this protein is Class I hydrophobin 10.